A 105-amino-acid chain; its full sequence is Guanidinium exporter (105 aa).

The chain crosses the membrane as a helical span at residues 1–21 (MSWIILVIAGLLEVVWAVGLK). The Cytoplasmic segment spans residues 22–28 (YTHGFSR). The chain crosses the membrane as a helical span at residues 29–49 (LTPSVITVTAMIVSLALLAWA). The Periplasmic portion of the chain corresponds to 50–57 (MKSLPVGT). The helical transmembrane segment at 58–78 (AYAVWTGIGAVGAAITGIVLL) threads the bilayer. Over 79 to 81 (GES) the chain is Cytoplasmic. The chain crosses the membrane as a helical span at residues 82-102 (ANPMRLASLALIVLGIIGLKL). At 103-105 (STH) the chain is on the periplasmic side.

This sequence belongs to the drug/metabolite transporter (DMT) superfamily. Small multidrug resistance (SMR) (TC 2.A.7.1) family. Gdx/SugE subfamily.

It is found in the cell inner membrane. Its function is as follows. Guanidinium ion exporter. Couples guanidinium export to the proton motive force, exchanging one guanidinium ion for two protons. This Escherichia coli O6:H1 (strain CFT073 / ATCC 700928 / UPEC) protein is Guanidinium exporter.